A 1224-amino-acid polypeptide reads, in one-letter code: Cytosolic carboxypeptidase 1 (1224 aa).

Residues 361–398 are disordered; the sequence is PPDVDDVVDESDDNDDAETESEIETEDDKDQNFKNDDI. The segment covering 363 to 389 has biased composition (acidic residues); it reads DVDDVVDESDDNDDAETESEIETEDDK. Positions 846–1136 constitute a Peptidase M14 domain; sequence YPYTYSTLKM…KFCVGLLRLK (291 aa). The Zn(2+) site is built by H918, E921, and H1015. E1100 (proton donor/acceptor) is an active-site residue. The segment covering 1186 to 1197 has biased composition (acidic residues); the sequence is SAESNDDQDAEL. The interval 1186–1224 is disordered; that stretch reads SAESNDDQDAELADNVGDYEANNQEDGLSDSDSTRILLS. The segment covering 1206–1224 has biased composition (polar residues); it reads ANNQEDGLSDSDSTRILLS.

Belongs to the peptidase M14 family. Requires Zn(2+) as cofactor.

The protein resides in the cytoplasm. The protein localises to the cytosol. It is found in the nucleus. It localises to the mitochondrion. The catalysed reaction is (L-glutamyl)(n+1)-gamma-L-glutamyl-L-glutamyl-[protein] + H2O = (L-glutamyl)(n)-gamma-L-glutamyl-L-glutamyl-[protein] + L-glutamate. It catalyses the reaction C-terminal L-alpha-aminoacyl-L-glutamyl-L-glutamyl-[tubulin] + H2O = C-terminal L-alpha-aminoacyl-L-glutamyl-[tubulin] + L-glutamate. Functionally, metallocarboxypeptidase that mediates protein deglutamylation of tubulin and non-tubulin target proteins. Catalyzes the removal of polyglutamate side chains present on the gamma-carboxyl group of glutamate residues within the C-terminal tail of alpha- and beta-tubulin. Specifically cleaves tubulin long-side-chains, while it is not able to remove the branching point glutamate. Also catalyzes the removal of polyglutamate residues from the carboxy-terminus of alpha-tubulin as well as non-tubulin proteins. This Gallus gallus (Chicken) protein is Cytosolic carboxypeptidase 1 (AGTPBP1).